The chain runs to 343 residues: Aspartate carbamoyltransferase catalytic subunit (343 aa).

Polar residues predominate over residues 1–14 (MTTDTTGRTGNPAA). The tract at residues 1–20 (MTTDTTGRTGNPAATASPDR) is disordered. Arg91 and Thr92 together coordinate carbamoyl phosphate. L-aspartate is bound at residue Lys119. Residues Arg141, His171, and Gln174 each contribute to the carbamoyl phosphate site. Arg204 and Arg259 together coordinate L-aspartate. Gly300 and Pro301 together coordinate carbamoyl phosphate.

Belongs to the aspartate/ornithine carbamoyltransferase superfamily. ATCase family. In terms of assembly, heterododecamer (2C3:3R2) of six catalytic PyrB chains organized as two trimers (C3), and six regulatory PyrI chains organized as three dimers (R2).

It catalyses the reaction carbamoyl phosphate + L-aspartate = N-carbamoyl-L-aspartate + phosphate + H(+). Its pathway is pyrimidine metabolism; UMP biosynthesis via de novo pathway; (S)-dihydroorotate from bicarbonate: step 2/3. Its function is as follows. Catalyzes the condensation of carbamoyl phosphate and aspartate to form carbamoyl aspartate and inorganic phosphate, the committed step in the de novo pyrimidine nucleotide biosynthesis pathway. This chain is Aspartate carbamoyltransferase catalytic subunit, found in Burkholderia lata (strain ATCC 17760 / DSM 23089 / LMG 22485 / NCIMB 9086 / R18194 / 383).